A 550-amino-acid polypeptide reads, in one-letter code: Hydroxylamine reductase (550 aa).

[2Fe-2S] cluster-binding residues include Cys-3, Cys-6, Cys-18, and Cys-25. The hybrid [4Fe-2O-2S] cluster site is built by His-249, Glu-273, Cys-317, Cys-405, Cys-433, Cys-458, Glu-492, and Lys-494. Cys-405 carries the post-translational modification Cysteine persulfide.

The protein belongs to the HCP family. [2Fe-2S] cluster is required as a cofactor. Requires hybrid [4Fe-2O-2S] cluster as cofactor.

The protein localises to the cytoplasm. The enzyme catalyses A + NH4(+) + H2O = hydroxylamine + AH2 + H(+). Catalyzes the reduction of hydroxylamine to form NH(3) and H(2)O. This Salmonella dublin (strain CT_02021853) protein is Hydroxylamine reductase.